The primary structure comprises 560 residues: Eukaryotic translation initiation factor 3 subunit D-1 (560 aa).

The tract at residues V98–S166 is disordered. The segment covering K100–N121 has biased composition (basic residues). T128 bears the Phosphothreonine mark. Basic residues predominate over residues G147 to H156. The RNA gate stretch occupies residues E291 to P305.

This sequence belongs to the eIF-3 subunit D family. In terms of assembly, component of the eukaryotic translation initiation factor 3 (eIF-3) complex. The eIF-3 complex interacts with pix.

The protein localises to the cytoplasm. In terms of biological role, mRNA cap-binding component of the eukaryotic translation initiation factor 3 (eIF-3) complex, which is involved in protein synthesis of a specialized repertoire of mRNAs and, together with other initiation factors, stimulates binding of mRNA and methionyl-tRNAi to the 40S ribosome. The eIF-3 complex specifically targets and initiates translation of a subset of mRNAs involved in cell proliferation. In the eIF-3 complex, eif3d specifically recognizes and binds the 7-methylguanosine cap of a subset of mRNAs. The sequence is that of Eukaryotic translation initiation factor 3 subunit D-1 from Drosophila yakuba (Fruit fly).